Consider the following 293-residue polypeptide: MEAVLTEELDEEEQLLRRHRKEKKELQAKIQGMKNAVPKNDKKRRKQLTEDVAKLEKEMEQKHREELEQLKLTTKENKIDSVAVNISNLVLENQPPRISKAQKRREKKAALEKEREERIAEAEIENLTGARHMESEKLAQILAARQLEIKQIPSDGHCMYKAIEDQLKEKDCALTVVALRSQTAEYMQSHVEDFLPFLTNPNTGDMYTPEEFQKYCEDIVNTAAWGGQLELRALSHILQTPIEIIQADSPPIIVGEEYSKKPLILVYMRHAYGLGEHYNSVTRLVNIVTENCS.

Met1 carries the N-acetylmethionine modification. In terms of domain architecture, OTU spans 147 to 284; it reads LEIKQIPSDG…GEHYNSVTRL (138 aa). The segment at 152–158 is cys-loop; the sequence is IPSDGHC. Asp155 is a catalytic residue. Cys158 (nucleophile) is an active-site residue. The variable-loop stretch occupies residues 219 to 229; sequence IVNTAAWGGQL. Residues 267–277 form a his-loop region; sequence YMRHAYGLGEH. Residue His277 is part of the active site.

As to quaternary structure, interacts with the eukaryotic translation initiation factor 4F complex.

The catalysed reaction is Thiol-dependent hydrolysis of ester, thioester, amide, peptide and isopeptide bonds formed by the C-terminal Gly of ubiquitin (a 76-residue protein attached to proteins as an intracellular targeting signal).. In terms of biological role, deubiquitinating enzyme that may play a role in the ubiquitin-dependent regulation of protein synthesis, downstream of mTORC1. May associate with the protein synthesis initiation complex and modify its ubiquitination to repress translation. May also repress DNA synthesis and modify different cellular targets thereby regulating cell growth and proliferation. May also play a role in proteasome assembly and function. Its function is as follows. Stimulates protein synthesis. Influences the expression of CCND1/cyclin D1 by promoting its translation and regulates MYC/c-Myc protein stability. This Homo sapiens (Human) protein is Deubiquitinase OTUD6B.